Here is an 88-residue protein sequence, read N- to C-terminus: Ribonuclease P protein component 1 (88 aa).

Belongs to the eukaryotic/archaeal RNase P protein component 1 family. Consists of a catalytic RNA component and at least 4-5 protein subunits.

The protein localises to the cytoplasm. The enzyme catalyses Endonucleolytic cleavage of RNA, removing 5'-extranucleotides from tRNA precursor.. In terms of biological role, part of ribonuclease P, a protein complex that generates mature tRNA molecules by cleaving their 5'-ends. This chain is Ribonuclease P protein component 1, found in Nitrosopumilus maritimus (strain SCM1).